Consider the following 539-residue polypeptide: Eukaryotic translation initiation factor 3 subunit L (539 aa).

Residues 306-514 (TFSDILLYIQ…IHIADTKVSH (209 aa)) form the PCI domain.

Belongs to the eIF-3 subunit L family. In terms of assembly, component of the eukaryotic translation initiation factor 3 (eIF-3) complex. The eIF-3 complex interacts with pix.

The protein localises to the cytoplasm. Its function is as follows. Component of the eukaryotic translation initiation factor 3 (eIF-3) complex, which is involved in protein synthesis of a specialized repertoire of mRNAs and, together with other initiation factors, stimulates binding of mRNA and methionyl-tRNAi to the 40S ribosome. The eIF-3 complex specifically targets and initiates translation of a subset of mRNAs involved in cell proliferation. The chain is Eukaryotic translation initiation factor 3 subunit L from Drosophila melanogaster (Fruit fly).